The sequence spans 840 residues: Intracellular phospholipase A1 (840 aa).

2 disordered regions span residues Met1–Lys142 and Lys666–Ala718. Basic and acidic residues predominate over residues Gly26–Met39. Positions Ser97–Ser111 are enriched in low complexity. Positions Leu564–Cys827 constitute a DDHD domain. The segment covering Asn668–Gly680 has biased composition (basic and acidic residues). Positions Asp681–Glu694 are enriched in acidic residues.

It belongs to the PA-PLA1 family.

It catalyses the reaction 1,2-dihexadecanoyl-sn-glycero-3-phospho-(1D-myo-inositol) + H2O = 2-hexadecanoyl-sn-glycero-3-phospho-(1D-myo-inositol) + hexadecanoate + H(+). It carries out the reaction a 1,2-diacyl-sn-glycero-3-phospho-L-serine + H2O = a 2-acyl-sn-glycero-3-phospho-L-serine + a fatty acid + H(+). The enzyme catalyses 1-hexadecanoyl-2-(9Z-octadecenoyl)-sn-glycero-3-phospho-L-serine + H2O = 2-(9Z-octadecenoyl)-sn-glycero-3-phospho-L-serine + hexadecanoate + H(+). The catalysed reaction is 1,2-di-(9Z-octadecenoyl)-sn-glycero-3-phosphocholine + H2O = (9Z-octadecenoyl)-sn-glycero-3-phosphocholine + (9Z)-octadecenoate + H(+). It catalyses the reaction a 1,2-diacyl-sn-glycero-3-phosphocholine + H2O = a 1-acyl-sn-glycero-3-phosphocholine + a fatty acid + H(+). It carries out the reaction 1,2-dihexadecanoyl-sn-glycero-3-phosphocholine + H2O = 1-hexadecanoyl-sn-glycero-3-phosphocholine + hexadecanoate + H(+). With respect to regulation, inhibited by E-6-bromomethylene-3-1-naphthalenyl-2H-tetrahydropyran-2-one (BEL) in vitro. Its function is as follows. Hydrolyzes the ester bond at the sn-1 position of glycerophospholipids and produces 2-acyl lysophospholipids, being phosphatidylinositol (PI) its major substrate. PI is a versatile lipid that not only serves as a structural component of cellular membranes, but also plays important roles in signal transduction through distinct phosphorylated derivatives of the inositol head group. Catalyzes the hydrolysis of phosphatidylcholine at sn-2 position in vitro. Regulates asymmetric division, an important property of stem cells in C.elegans, by controlling the subcellular localizations of beta-catenin. The polypeptide is Intracellular phospholipase A1 (Caenorhabditis elegans).